The sequence spans 176 residues: Isopentenyl-diphosphate Delta-isomerase (176 aa).

Residues histidine 22 and histidine 28 each coordinate Mn(2+). The Nudix hydrolase domain maps to 26–160 (LRHKAISVFI…PETFTPWLHI (135 aa)). The active site involves cysteine 62. Mn(2+) is bound at residue histidine 64. Residue glutamate 82 participates in Mg(2+) binding. Mn(2+)-binding residues include glutamate 108 and glutamate 110. Residue glutamate 110 is part of the active site.

It belongs to the IPP isomerase type 1 family. It depends on Mg(2+) as a cofactor. Requires Mn(2+) as cofactor.

The protein localises to the cytoplasm. It catalyses the reaction isopentenyl diphosphate = dimethylallyl diphosphate. The protein operates within isoprenoid biosynthesis; dimethylallyl diphosphate biosynthesis; dimethylallyl diphosphate from isopentenyl diphosphate: step 1/1. It participates in porphyrin-containing compound metabolism; chlorophyll biosynthesis. In terms of biological role, catalyzes the 1,3-allylic rearrangement of the homoallylic substrate isopentenyl (IPP) to its highly electrophilic allylic isomer, dimethylallyl diphosphate (DMAPP). The sequence is that of Isopentenyl-diphosphate Delta-isomerase from Jannaschia sp. (strain CCS1).